The following is a 132-amino-acid chain: L-ectoine synthase (132 aa).

This sequence belongs to the ectoine synthase family.

It carries out the reaction (2S)-4-acetamido-2-aminobutanoate = L-ectoine + H2O. Its pathway is amine and polyamine biosynthesis; ectoine biosynthesis; L-ectoine from L-aspartate 4-semialdehyde: step 3/3. Catalyzes the circularization of gamma-N-acetyl-alpha,gamma-diaminobutyric acid (ADABA) to ectoine (1,4,5,6-tetrahydro-2-methyl-4-pyrimidine carboxylic acid), which is an excellent osmoprotectant. This is L-ectoine synthase from Rhodococcus erythropolis (strain PR4 / NBRC 100887).